The sequence spans 115 residues: Toxin-like structure LSTX-D1 (115 aa).

The N-terminal stretch at 1 to 22 is a signal peptide; that stretch reads MKVLVLFSVLFLTLFSYSSTEA. The propeptide occupies 23–44; sequence IDEFDSDAEEDMLSLMANEQVR. Cystine bridges form between C48–C63, C55–C72, C62–C87, and C74–C85.

Belongs to the neurotoxin 19 (CSTX) family. 01 subfamily. In terms of tissue distribution, expressed by the venom gland.

Its subcellular location is the secreted. This is Toxin-like structure LSTX-D1 from Lycosa singoriensis (Wolf spider).